The sequence spans 199 residues: Recombination protein RecR (199 aa).

The C4-type zinc finger occupies 58-73 (CSVCSNLTDIDPCPLC). The Toprim domain occupies 81–176 (TVICVVQDPR…KATRIAHGIP (96 aa)).

The protein belongs to the RecR family.

Functionally, may play a role in DNA repair. It seems to be involved in an RecBC-independent recombinational process of DNA repair. It may act with RecF and RecO. This Ruminiclostridium cellulolyticum (strain ATCC 35319 / DSM 5812 / JCM 6584 / H10) (Clostridium cellulolyticum) protein is Recombination protein RecR.